The following is a 183-amino-acid chain: Probable chemoreceptor glutamine deamidase CheD (183 aa).

This sequence belongs to the CheD family.

The catalysed reaction is L-glutaminyl-[protein] + H2O = L-glutamyl-[protein] + NH4(+). Its function is as follows. Probably deamidates glutamine residues to glutamate on methyl-accepting chemotaxis receptors (MCPs), playing an important role in chemotaxis. This is Probable chemoreceptor glutamine deamidase CheD from Rhizobium meliloti (strain 1021) (Ensifer meliloti).